Here is a 72-residue protein sequence, read N- to C-terminus: Translation initiation factor IF-1 (72 aa).

The region spanning 1–72 (MAKEELLEFP…TKGRITYRFK (72 aa)) is the S1-like domain.

Belongs to the IF-1 family. In terms of assembly, component of the 30S ribosomal translation pre-initiation complex which assembles on the 30S ribosome in the order IF-2 and IF-3, IF-1 and N-formylmethionyl-tRNA(fMet); mRNA recruitment can occur at any time during PIC assembly.

The protein resides in the cytoplasm. Functionally, one of the essential components for the initiation of protein synthesis. Stabilizes the binding of IF-2 and IF-3 on the 30S subunit to which N-formylmethionyl-tRNA(fMet) subsequently binds. Helps modulate mRNA selection, yielding the 30S pre-initiation complex (PIC). Upon addition of the 50S ribosomal subunit IF-1, IF-2 and IF-3 are released leaving the mature 70S translation initiation complex. In Caulobacter vibrioides (strain ATCC 19089 / CIP 103742 / CB 15) (Caulobacter crescentus), this protein is Translation initiation factor IF-1.